Reading from the N-terminus, the 947-residue chain is Bifunctional glutamine synthetase adenylyltransferase/adenylyl-removing enzyme (947 aa).

The adenylyl removase stretch occupies residues 1–440 (MTPLSSPLSQ…VFNELIGDDE (440 aa)). The adenylyl transferase stretch occupies residues 450–947 (SEPWRDVWQD…ASWRKWLVAV (498 aa)).

This sequence belongs to the GlnE family. Mg(2+) is required as a cofactor.

It catalyses the reaction [glutamine synthetase]-O(4)-(5'-adenylyl)-L-tyrosine + phosphate = [glutamine synthetase]-L-tyrosine + ADP. The enzyme catalyses [glutamine synthetase]-L-tyrosine + ATP = [glutamine synthetase]-O(4)-(5'-adenylyl)-L-tyrosine + diphosphate. Its function is as follows. Involved in the regulation of glutamine synthetase GlnA, a key enzyme in the process to assimilate ammonia. When cellular nitrogen levels are high, the C-terminal adenylyl transferase (AT) inactivates GlnA by covalent transfer of an adenylyl group from ATP to specific tyrosine residue of GlnA, thus reducing its activity. Conversely, when nitrogen levels are low, the N-terminal adenylyl removase (AR) activates GlnA by removing the adenylyl group by phosphorolysis, increasing its activity. The regulatory region of GlnE binds the signal transduction protein PII (GlnB) which indicates the nitrogen status of the cell. This chain is Bifunctional glutamine synthetase adenylyltransferase/adenylyl-removing enzyme, found in Salmonella dublin (strain CT_02021853).